Consider the following 541-residue polypeptide: MAKFIFITGGVVSGLGKGITAASLGRLIKSRGYRVTALKFDPYLNVDPGTMSPIQHGEVFVTEDGGECDLDVGHYERFMDVNMGKGNNVTTGKIYSSVIAKERRGDYLGGTVQVIPHITNEIKSHIRRVAEDSDADVILVEIGGTVGDIEGQPFLEAIRQFKNEVPSKDDVLFIHVTLVPYIAASGELKTKPTQHSVRELRSIGIQPDVIVCRSDREIPKDLREKIALFCDVPPEAVIPNEDLGSLYEVPLAMEKEGLAEIVCRRLGLDSRTPDLAEWEALVQRAKHPEREVEIALVGKYVALEDAYLSVVESLNHAGIHNNARVRIHWVDSEKLENGITPEALEACLGRADGILVPGGFGYRGIEGKINAIRYAREKGIPFFGICMGMQSAVIEAARNLLGLSKANSTEFVTDCKDPVIDMMAQQKQVTDLGGTMRLGAFPCRLKPGSKAHAAYGTEVVHERHRHRFEVNNAYLERLEAVGLKAVGVWPEGNLVEVVEMEGHPWFVGVQFHPEFKSRPNRPHPLFRDFIKAALEYRAGKK.

The amidoligase domain stretch occupies residues 1 to 268; it reads MAKFIFITGG…AEIVCRRLGL (268 aa). Ser-13 contacts CTP. Position 13 (Ser-13) interacts with UTP. Residues 14–19 and Asp-71 contribute to the ATP site; that span reads GLGKGI. Residues Asp-71 and Glu-141 each contribute to the Mg(2+) site. Residues 148-150, 189-194, and Lys-225 each bind CTP; these read DIE and KTKPTQ. UTP is bound by residues 189–194 and Lys-225; that span reads KTKPTQ. Residues 293-539 form the Glutamine amidotransferase type-1 domain; the sequence is EIALVGKYVA…IKAALEYRAG (247 aa). Residue Gly-359 coordinates L-glutamine. The active-site Nucleophile; for glutamine hydrolysis is the Cys-386. Residues 387–390, Glu-410, and Arg-467 each bind L-glutamine; that span reads MGMQ. Catalysis depends on residues His-512 and Glu-514.

Belongs to the CTP synthase family. In terms of assembly, homotetramer.

The enzyme catalyses UTP + L-glutamine + ATP + H2O = CTP + L-glutamate + ADP + phosphate + 2 H(+). The catalysed reaction is L-glutamine + H2O = L-glutamate + NH4(+). It carries out the reaction UTP + NH4(+) + ATP = CTP + ADP + phosphate + 2 H(+). It participates in pyrimidine metabolism; CTP biosynthesis via de novo pathway; CTP from UDP: step 2/2. Allosterically activated by GTP, when glutamine is the substrate; GTP has no effect on the reaction when ammonia is the substrate. The allosteric effector GTP functions by stabilizing the protein conformation that binds the tetrahedral intermediate(s) formed during glutamine hydrolysis. Inhibited by the product CTP, via allosteric rather than competitive inhibition. Its function is as follows. Catalyzes the ATP-dependent amination of UTP to CTP with either L-glutamine or ammonia as the source of nitrogen. Regulates intracellular CTP levels through interactions with the four ribonucleotide triphosphates. This Symbiobacterium thermophilum (strain DSM 24528 / JCM 14929 / IAM 14863 / T) protein is CTP synthase.